The following is a 271-amino-acid chain: Small ribosomal subunit protein uS2 (271 aa).

The disordered stretch occupies residues R223–K271. Positions M253 to K271 are enriched in acidic residues.

Belongs to the universal ribosomal protein uS2 family.

This Wolinella succinogenes (strain ATCC 29543 / DSM 1740 / CCUG 13145 / JCM 31913 / LMG 7466 / NCTC 11488 / FDC 602W) (Vibrio succinogenes) protein is Small ribosomal subunit protein uS2.